A 591-amino-acid polypeptide reads, in one-letter code: Aspartate--tRNA ligase (591 aa).

Glutamate 173 serves as a coordination point for L-aspartate. An aspartate region spans residues 197–200 (QLFK). Arginine 219 provides a ligand contact to L-aspartate. Residues 219–221 (RDE) and glutamine 228 contribute to the ATP site. Histidine 446 is an L-aspartate binding site. Glutamate 482 is an ATP binding site. Arginine 489 serves as a coordination point for L-aspartate. 534-537 (GLDR) provides a ligand contact to ATP.

Belongs to the class-II aminoacyl-tRNA synthetase family. Type 1 subfamily. In terms of assembly, homodimer.

It is found in the cytoplasm. It carries out the reaction tRNA(Asp) + L-aspartate + ATP = L-aspartyl-tRNA(Asp) + AMP + diphosphate. Functionally, catalyzes the attachment of L-aspartate to tRNA(Asp) in a two-step reaction: L-aspartate is first activated by ATP to form Asp-AMP and then transferred to the acceptor end of tRNA(Asp). The chain is Aspartate--tRNA ligase from Limosilactobacillus fermentum (strain NBRC 3956 / LMG 18251) (Lactobacillus fermentum).